The primary structure comprises 124 residues: Ribonuclease pancreatic (124 aa).

Residues K1–M13 show a composition bias toward basic and acidic residues. Residues K1–S22 form a disordered region. K7 and R10 together coordinate substrate. H12 functions as the Proton acceptor in the catalytic mechanism. 4 cysteine pairs are disulfide-bonded: C26-C84, C40-C95, C58-C110, and C65-C72. An N-linked (GlcNAc...) asparagine glycan is attached at N34. Residues K41–T45, K66, and R85 contribute to the substrate site. H119 acts as the Proton donor in catalysis.

This sequence belongs to the pancreatic ribonuclease family. Monomer. Interacts with and forms tight 1:1 complexes with RNH1. Dimerization of two such complexes may occur. Interaction with RNH1 inhibits this protein. Pancreas.

It is found in the secreted. The enzyme catalyses an [RNA] containing cytidine + H2O = an [RNA]-3'-cytidine-3'-phosphate + a 5'-hydroxy-ribonucleotide-3'-[RNA].. It catalyses the reaction an [RNA] containing uridine + H2O = an [RNA]-3'-uridine-3'-phosphate + a 5'-hydroxy-ribonucleotide-3'-[RNA].. Its function is as follows. Endonuclease that catalyzes the cleavage of RNA on the 3' side of pyrimidine nucleotides. Acts on single-stranded and double-stranded RNA. The protein is Ribonuclease pancreatic (RNASE1) of Bison bison (American bison).